The following is a 639-amino-acid chain: Chaperone protein DnaK (639 aa).

Thr-197 is subject to Phosphothreonine; by autocatalysis. 2 stretches are compositionally biased toward basic and acidic residues: residues 514–529 and 540–553; these read AEENAEADKDRKDLVE and GTEKSLEEHGEKVD. 2 disordered regions span residues 514 to 554 and 603 to 639; these read AEEN…KVDP and DKAEAAQDGAPEEEERGVDEDIVDADFEDLDDDRKRG. Acidic residues predominate over residues 612-633; that stretch reads APEEEERGVDEDIVDADFEDLD.

It belongs to the heat shock protein 70 family.

Functionally, acts as a chaperone. The polypeptide is Chaperone protein DnaK (Jannaschia sp. (strain CCS1)).